The primary structure comprises 1420 residues: DNA-directed RNA polymerase subunit beta' (1420 aa).

Positions 70, 72, 85, and 88 each coordinate Zn(2+). Residues D464, D466, and D468 each coordinate Mg(2+). The Zn(2+) site is built by C823, C897, C904, and C907.

This sequence belongs to the RNA polymerase beta' chain family. In terms of assembly, the RNAP catalytic core consists of 2 alpha, 1 beta, 1 beta' and 1 omega subunit. When a sigma factor is associated with the core the holoenzyme is formed, which can initiate transcription. Mg(2+) serves as cofactor. The cofactor is Zn(2+).

The catalysed reaction is RNA(n) + a ribonucleoside 5'-triphosphate = RNA(n+1) + diphosphate. In terms of biological role, DNA-dependent RNA polymerase catalyzes the transcription of DNA into RNA using the four ribonucleoside triphosphates as substrates. The protein is DNA-directed RNA polymerase subunit beta' of Polynucleobacter necessarius subsp. necessarius (strain STIR1).